Reading from the N-terminus, the 472-residue chain is UDP-N-acetylmuramate--L-alanine ligase (472 aa).

122-128 (GSHGKTT) lines the ATP pocket.

The protein belongs to the MurCDEF family.

The protein resides in the cytoplasm. The enzyme catalyses UDP-N-acetyl-alpha-D-muramate + L-alanine + ATP = UDP-N-acetyl-alpha-D-muramoyl-L-alanine + ADP + phosphate + H(+). It participates in cell wall biogenesis; peptidoglycan biosynthesis. Its function is as follows. Cell wall formation. The chain is UDP-N-acetylmuramate--L-alanine ligase from Myxococcus xanthus (strain DK1622).